We begin with the raw amino-acid sequence, 412 residues long: uncharacterized protein (412 aa).

H49 serves as a coordination point for Zn(2+). E52 (proton acceptor) is an active-site residue. The Zn(2+) site is built by H53 and E129.

Belongs to the peptidase M16 family. Zn(2+) is required as a cofactor.

This is an uncharacterized protein from Rickettsia bellii (strain RML369-C).